A 256-amino-acid chain; its full sequence is Hemin import ATP-binding protein HmuV (256 aa).

The region spanning 2-238 is the ABC transporter domain; sequence ISAQNLVYSL…QALTMLYGAD (237 aa). 34–41 lines the ATP pocket; sequence GPNGAGKS.

This sequence belongs to the ABC transporter superfamily. Heme (hemin) importer (TC 3.A.1.14.5) family. The complex is composed of two ATP-binding proteins (HmuV), two transmembrane proteins (HmuU) and a solute-binding protein (HmuT).

The protein resides in the cell inner membrane. In terms of biological role, part of the ABC transporter complex HmuTUV involved in hemin import. Responsible for energy coupling to the transport system. The protein is Hemin import ATP-binding protein HmuV of Shigella dysenteriae serotype 1 (strain Sd197).